A 260-amino-acid chain; its full sequence is Large ribosomal subunit protein uL2 (260 aa).

The interval 1–24 (MGRVIRAQRKGAGSVFKSHTHHRK) is disordered.

The protein belongs to the universal ribosomal protein uL2 family.

It localises to the cytoplasm. The chain is Large ribosomal subunit protein uL2 (RPL8) from Solanum lycopersicum (Tomato).